Here is a 131-residue protein sequence, read N- to C-terminus: Translation initiation factor 5A (131 aa).

Hypusine is present on Lys-36.

Belongs to the eIF-5A family.

Its subcellular location is the cytoplasm. Functionally, functions by promoting the formation of the first peptide bond. The polypeptide is Translation initiation factor 5A (Sulfurisphaera tokodaii (strain DSM 16993 / JCM 10545 / NBRC 100140 / 7) (Sulfolobus tokodaii)).